The chain runs to 459 residues: MLKLLIPTIMLFPMIWTLNPKWLWSATTTHSLIIASLSLTLFKCYSTTQWSNLNYMLATDMISTPLIILTCWLLPLMIIASQNHMSTEPINRQRSYITLLVSLQALLIMAFSATEIILFYIMFESTLIPTLIIITRWGNQTERLNAGIYFLFYTLAGSLPLLVALLYLYNTAGSLSFISMNLISIPPNTWTNTFLWVACVTAFLVKMPLYGVHLWLPKAHVEAPVAGSMILAAILLKLGGYGMIRMTIMLEPATKSLAYPFIILALWGIIMTGSICMRQSDMKSLIAYSSVSHMGLVASGILIQTTWGFTGAIILMIAHGLTSSALFCLANTAYERTHSRTLLLARGMQIILPLMATWWFIMSLANMALPPLPNLMGELMILVSMFNWSNWTILLTGTGTLITASYSLYLYMSSQRGPTPNNLTFMELSHTREHLLLTLHIIPIILLMIKPELIWGWCW.

12 helical membrane passes run 20–42, 61–81, 103–123, 148–168, 194–214, 224–244, 257–277, 284–303, 307–329, 350–370, 392–414, and 435–455; these read PKWLWSATTTHSLIIASLSLTLF, MISTPLIILTCWLLPLMIIAS, LQALLIMAFSATEIILFYIMF, IYFLFYTLAGSLPLLVALLYL, FLWVACVTAFLVKMPLYGVHL, PVAGSMILAAILLKLGGYGMI, LAYPFIILALWGIIMTGSICM, SLIAYSSVSHMGLVASGILI, WGFTGAIILMIAHGLTSSALFCL, IILPLMATWWFIMSLANMALP, TILLTGTGTLITASYSLYLYMSS, and LLLTLHIIPIILLMIKPELIW.

This sequence belongs to the complex I subunit 4 family.

The protein localises to the mitochondrion membrane. The enzyme catalyses a ubiquinone + NADH + 5 H(+)(in) = a ubiquinol + NAD(+) + 4 H(+)(out). In terms of biological role, core subunit of the mitochondrial membrane respiratory chain NADH dehydrogenase (Complex I) that is believed to belong to the minimal assembly required for catalysis. Complex I functions in the transfer of electrons from NADH to the respiratory chain. The immediate electron acceptor for the enzyme is believed to be ubiquinone. This Polypterus ornatipinnis (Ornate bichir) protein is NADH-ubiquinone oxidoreductase chain 4 (MT-ND4).